A 239-amino-acid chain; its full sequence is Large ribosomal subunit protein uL2 (239 aa).

A disordered region spans residues 200-239 (VNHPHGGKEHHIGRPSTVSRRAPPGRKVGHIAARRTGRRK). The span at 222–239 (PPGRKVGHIAARRTGRRK) shows a compositional bias: basic residues.

The protein belongs to the universal ribosomal protein uL2 family. As to quaternary structure, part of the 50S ribosomal subunit. Forms a bridge to the 30S subunit in the 70S ribosome.

One of the primary rRNA binding proteins. Required for association of the 30S and 50S subunits to form the 70S ribosome, for tRNA binding and peptide bond formation. It has been suggested to have peptidyltransferase activity; this is somewhat controversial. Makes several contacts with the 16S rRNA in the 70S ribosome. The sequence is that of Large ribosomal subunit protein uL2 from Thermococcus kodakarensis (strain ATCC BAA-918 / JCM 12380 / KOD1) (Pyrococcus kodakaraensis (strain KOD1)).